We begin with the raw amino-acid sequence, 139 residues long: Nucleoside diphosphate kinase (139 aa).

Residues Lys11, Phe59, Arg87, Thr93, Arg104, and Asn114 each coordinate ATP. Residue His117 is the Pros-phosphohistidine intermediate of the active site.

The protein belongs to the NDK family. Homotetramer. Mg(2+) is required as a cofactor.

It is found in the cytoplasm. The enzyme catalyses a 2'-deoxyribonucleoside 5'-diphosphate + ATP = a 2'-deoxyribonucleoside 5'-triphosphate + ADP. The catalysed reaction is a ribonucleoside 5'-diphosphate + ATP = a ribonucleoside 5'-triphosphate + ADP. Functionally, major role in the synthesis of nucleoside triphosphates other than ATP. The ATP gamma phosphate is transferred to the NDP beta phosphate via a ping-pong mechanism, using a phosphorylated active-site intermediate. This Wolbachia sp. subsp. Brugia malayi (strain TRS) protein is Nucleoside diphosphate kinase.